A 341-amino-acid chain; its full sequence is S-adenosylmethionine:tRNA ribosyltransferase-isomerase (341 aa).

This sequence belongs to the QueA family. Monomer.

The protein localises to the cytoplasm. The enzyme catalyses 7-aminomethyl-7-carbaguanosine(34) in tRNA + S-adenosyl-L-methionine = epoxyqueuosine(34) in tRNA + adenine + L-methionine + 2 H(+). It participates in tRNA modification; tRNA-queuosine biosynthesis. Functionally, transfers and isomerizes the ribose moiety from AdoMet to the 7-aminomethyl group of 7-deazaguanine (preQ1-tRNA) to give epoxyqueuosine (oQ-tRNA). This chain is S-adenosylmethionine:tRNA ribosyltransferase-isomerase, found in Chlorobium luteolum (strain DSM 273 / BCRC 81028 / 2530) (Pelodictyon luteolum).